A 169-amino-acid polypeptide reads, in one-letter code: Putative hydrogenase maturation protease MJ0631 (169 aa).

This sequence belongs to the peptidase A31 family.

The polypeptide is Putative hydrogenase maturation protease MJ0631 (Methanocaldococcus jannaschii (strain ATCC 43067 / DSM 2661 / JAL-1 / JCM 10045 / NBRC 100440) (Methanococcus jannaschii)).